Consider the following 527-residue polypeptide: Glucose-6-phosphate isomerase (527 aa).

Glu347 acts as the Proton donor in catalysis. Residues His378 and Lys493 contribute to the active site.

The protein belongs to the GPI family.

It is found in the cytoplasm. The catalysed reaction is alpha-D-glucose 6-phosphate = beta-D-fructose 6-phosphate. It participates in carbohydrate biosynthesis; gluconeogenesis. It functions in the pathway carbohydrate degradation; glycolysis; D-glyceraldehyde 3-phosphate and glycerone phosphate from D-glucose: step 2/4. Its function is as follows. Catalyzes the reversible isomerization of glucose-6-phosphate to fructose-6-phosphate. This chain is Glucose-6-phosphate isomerase, found in Chlamydia caviae (strain ATCC VR-813 / DSM 19441 / 03DC25 / GPIC) (Chlamydophila caviae).